Consider the following 412-residue polypeptide: Phosphatidylinositol 3,4,5-trisphosphate 3-phosphatase and protein-tyrosine-phosphatase PTEN1 (412 aa).

The 170-residue stretch at 42–211 (RRLIIGGYDL…KYWSDLLSFS (170 aa)) folds into the Phosphatase tensin-type domain. C152 (phosphocysteine intermediate) is an active-site residue. The C2 tensin-type domain occupies 239–396 (VDSVFFVVSE…FSLELLFGPA (158 aa)).

Belongs to the PTEN phosphatase protein family. In terms of tissue distribution, expressed exclusively in pollen grains during the late stage of development (at protein level).

The catalysed reaction is O-phospho-L-tyrosyl-[protein] + H2O = L-tyrosyl-[protein] + phosphate. It carries out the reaction a 1,2-diacyl-sn-glycero-3-phospho-(1D-myo-inositol-3,4,5-trisphosphate) + H2O = a 1,2-diacyl-sn-glycero-3-phospho-(1D-myo-inositol-4,5-bisphosphate) + phosphate. Its activity is regulated as follows. Inhibited by vanadate. Functionally, protein tyrosine phosphatase that also exhibits lipid phosphatase activity. Can use phosphatidylinositol substrates such as PtdIns(3,4,5)P(3) as substrate. Pollen-specific phosphatase required for pollen development. The sequence is that of Phosphatidylinositol 3,4,5-trisphosphate 3-phosphatase and protein-tyrosine-phosphatase PTEN1 from Arabidopsis thaliana (Mouse-ear cress).